The primary structure comprises 353 residues: Membrane lipoprotein TmpC (353 aa).

The first 20 residues, 1 to 20 (MREKWVRAFAGVFCAMLLIG), serve as a signal peptide directing secretion. C21 is lipidated: N-palmitoyl cysteine. C21 carries S-diacylglycerol cysteine lipidation. Guanosine is bound at residue D47. Inosine is bound at residue D47. Adenosine is bound by residues 47 to 48 (DS) and F56. Positions 57, 128, 206, 232, 258, and 280 each coordinate guanosine. Inosine is bound by residues N57 and D128. Positions 128, 206, 232, 258, and 280 each coordinate adenosine. Inosine-binding residues include G232, D258, and K280.

It belongs to the BMP lipoprotein family. Monomer.

Its subcellular location is the cell membrane. Its function is as follows. Binds purine nucleosides and may play a role in purine nucleoside uptake. May be part of an ABC-type nucleoside uptake system. Has highest affinity for guanosine, followed by inosine and adenosine. Has very low affinity for cytidine and does not bind thymidine. The protein is Membrane lipoprotein TmpC (tmpC) of Treponema pallidum (strain Nichols).